Consider the following 371-residue polypeptide: RNA-binding protein 48 (371 aa).

The RRM domain maps to 46 to 124; the sequence is QYLLIQGVPA…GLLHVCYAPE (79 aa). Disordered regions lie at residues 157-191 and 348-371; these read KPVP…PESP and VPKP…RRRI. A compositionally biased stretch (basic and acidic residues) spans 158–170; that stretch reads PVPEQKGTKDSRQ.

It belongs to the RBM48 family. Component of the minor spliceosome. Within this complex, interacts with ARMC7 and PRPF8/PRP8.

Functionally, as a component of the minor spliceosome, involved in the splicing of U12-type introns in pre-mRNAs. The sequence is that of RNA-binding protein 48 (Rbm48) from Mus musculus (Mouse).